The primary structure comprises 328 residues: Cell division protein ZipA (328 aa).

The Periplasmic portion of the chain corresponds to 1-4 (MDLN). Residues 5–25 (TILIIVGIVALVALIVHGLWS) form a helical membrane-spanning segment. The Cytoplasmic portion of the chain corresponds to 26–328 (NRREKSKYFD…NAEQAYLARV (303 aa)). A disordered region spans residues 44 to 82 (SLTSRSHTQEEMVQPNNISPNTYVENGHTPISQPTTEKL). Over residues 57 to 81 (QPNNISPNTYVENGHTPISQPTTEK) the composition is skewed to polar residues.

Belongs to the ZipA family. In terms of assembly, interacts with FtsZ via their C-terminal domains.

It is found in the cell inner membrane. In terms of biological role, essential cell division protein that stabilizes the FtsZ protofilaments by cross-linking them and that serves as a cytoplasmic membrane anchor for the Z ring. Also required for the recruitment to the septal ring of downstream cell division proteins. The chain is Cell division protein ZipA from Haemophilus influenzae (strain PittGG).